A 700-amino-acid chain; its full sequence is Polyphosphate kinase (700 aa).

N45 is a binding site for ATP. Mg(2+) is bound by residues R373 and R403. Residues 428–462 (PGMKIHAKLLLITRREEQGFVRYAHIGTGNFHERT) form the PLD phosphodiesterase 1 domain. H433 serves as the catalytic Phosphohistidine intermediate. ATP-binding residues include Y466, R562, and H590. The PLD phosphodiesterase 2 domain maps to 585–615 (DRFLEHPRVLVVHNDGDPQVFISSADWMERN).

This sequence belongs to the polyphosphate kinase 1 (PPK1) family. Mg(2+) serves as cofactor. Post-translationally, an intermediate of this reaction is the autophosphorylated ppk in which a phosphate is covalently linked to a histidine residue through a N-P bond.

It catalyses the reaction [phosphate](n) + ATP = [phosphate](n+1) + ADP. Its function is as follows. Catalyzes the reversible transfer of the terminal phosphate of ATP to form a long-chain polyphosphate (polyP). This is Polyphosphate kinase from Vibrio vulnificus (strain CMCP6).